The sequence spans 544 residues: Chaperonin GroEL (544 aa).

ATP is bound by residues 30–33 (TLGP), Lys-51, 87–91 (DGTTT), Gly-415, 479–481 (NAA), and Asp-495.

This sequence belongs to the chaperonin (HSP60) family. In terms of assembly, forms a cylinder of 14 subunits composed of two heptameric rings stacked back-to-back. Interacts with the co-chaperonin GroES.

The protein localises to the cytoplasm. It catalyses the reaction ATP + H2O + a folded polypeptide = ADP + phosphate + an unfolded polypeptide.. Its function is as follows. Together with its co-chaperonin GroES, plays an essential role in assisting protein folding. The GroEL-GroES system forms a nano-cage that allows encapsulation of the non-native substrate proteins and provides a physical environment optimized to promote and accelerate protein folding. The chain is Chaperonin GroEL from Francisella tularensis subsp. tularensis (strain SCHU S4 / Schu 4).